Consider the following 375-residue polypeptide: Proton-coupled zinc antiporter SLC30A8 (375 aa).

Residues 1–68 (MKGPEKAYLV…QREQTSAKKK (68 aa)) lie on the Cytoplasmic side of the membrane. His46, Cys47, and His48 together coordinate Zn(2+). An HCH Motif; seals regulatory zinc-binding pocket motif is present at residues 46-48 (HCH). A helical membrane pass occupies residues 69–89 (LCIASLICFVFISAEIVGGYI). Residues 90–98 (AGSLAVVTD) are Lumenal, vesicle-facing. The helical transmembrane segment at 99-119 (AAHLLVDLSSFFISLGSLWLS) threads the bilayer. His101 and Asp105 together coordinate Zn(2+). The Cytoplasmic segment spans residues 120 to 135 (SKSSTMRLTFGWYRAE). A helical membrane pass occupies residues 136-156 (ILGALMSIITIWLVTGVLVYL). Over 157-170 (AIERIIRPDYTIDG) the chain is Lumenal, vesicle. A helical membrane pass occupies residues 171–191 (TVMLITSACALGANVVLALIL). At 192–223 (HQSGHGHSHAGGKHEHMASEYKPQTNASIRAA) the chain is on the cytoplasmic side. A helical membrane pass occupies residues 224–244 (FIHVIGDLFQSISVLISALII). Zn(2+)-binding residues include His226 and Asp230. The Lumenal, vesicle portion of the chain corresponds to 245 to 251 (YFKPEYK). A helical membrane pass occupies residues 252–272 (IADPICTFIFSIFVLITTVTV). The Cytoplasmic portion of the chain corresponds to 273–375 (LRDLLNILME…ECMFCYEPTQ (103 aa)). Zn(2+) is bound by residues His307, His324, His351, Glu358, Cys367, and Cys370.

Belongs to the cation diffusion facilitator (CDF) transporter (TC 2.A.4) family. SLC30A subfamily. In terms of assembly, homodimer.

Its subcellular location is the cytoplasmic vesicle. It is found in the secretory vesicle membrane. It localises to the cell membrane. It catalyses the reaction Zn(2+)(in) + 2 H(+)(out) = Zn(2+)(out) + 2 H(+)(in). In terms of biological role, proton-coupled zinc ion antiporter mediating the entry of zinc into the lumen of pancreatic beta cell secretory granules, thereby regulating insulin secretion. This Xenopus laevis (African clawed frog) protein is Proton-coupled zinc antiporter SLC30A8 (slc30a8).